A 397-amino-acid chain; its full sequence is MQKKTLSDISLQGKRVLMRVDFNVPLDQDRNITDEKRIVEALPSIRKVIDNGGRLILMSHLGRPKGKVNPAFSLSPVAKRLSELLDCPVTMAGDCIGTEVMQQVLALQDGDVLMLENLRFHPEEEANDPDFARELASLGEIYVNDAFGTAHRAHASTEGITHFMQTAVAGYLIEKELRYLGTALNDAQRPFVAILGGAKISGKIDVLESLFEKVDTVLVGGAMVFTFFKAQGLDVGNSLVEENKLELAVSLLEKAKAKNVRLLLPEDVVVAGEISADAPSRVEPVSAISAGMIGLDIGPATIETYRKEILDAKTVLWNGPMGVFEIDQFARGTFAVAQALADATAEGAITIIGGGDSAAAIAKAGLSDKVTHVSTGGGASLEFLEGKELPGIAALND.

Residues 21–23 (DFN), arginine 37, 60–63 (HLGR), arginine 119, and arginine 152 contribute to the substrate site. ATP-binding positions include lysine 203, glycine 294, glutamate 325, and 354-357 (GGDS).

It belongs to the phosphoglycerate kinase family. In terms of assembly, monomer.

The protein resides in the cytoplasm. The enzyme catalyses (2R)-3-phosphoglycerate + ATP = (2R)-3-phospho-glyceroyl phosphate + ADP. The protein operates within carbohydrate degradation; glycolysis; pyruvate from D-glyceraldehyde 3-phosphate: step 2/5. The polypeptide is Phosphoglycerate kinase (Chlorobaculum tepidum (strain ATCC 49652 / DSM 12025 / NBRC 103806 / TLS) (Chlorobium tepidum)).